The sequence spans 212 residues: uncharacterized protein (212 aa).

Residues 1–18 (MIPLVALLVLLTLQASPG) form the signal peptide. A helical membrane pass occupies residues 186 to 208 (IYRLATFFMVSLFVGSFVALVFV).

The protein to A.fulgidus AF_0540.

The protein localises to the membrane. This is an uncharacterized protein from Archaeoglobus fulgidus (strain ATCC 49558 / DSM 4304 / JCM 9628 / NBRC 100126 / VC-16).